The sequence spans 212 residues: MTQLADLRRTYVLGSLNESDVAGDPIAQFKRWFDEAVTAKLPEPNAMTLATVGADGQPSARIVLLKGMDEKGFTFFTNYESRKGLDMAANPRAALLFHWVQLERQVRVEGRVEKVADDESDAYYASRPLGSRLGAWASEQSREVPGRDVLEQRESEYRAKFGENPPRPAHWGGYRLVPTALEFWQGRPSRLHDRIAYRVEADGSWKIVRLSP.

Substrate-binding positions include 8 to 11 and Lys66; that span reads RRTY. FMN contacts are provided by residues 61-66, 76-77, Arg82, Lys83, and Gln105; these read RIVLLK and FT. The substrate site is built by Tyr123, Arg127, and Ser131. Residues 140-141 and Trp184 contribute to the FMN site; that span reads QS. Substrate is bound at residue 190–192; sequence RLH. An FMN-binding site is contributed by Arg194.

It belongs to the pyridoxamine 5'-phosphate oxidase family. Homodimer. Requires FMN as cofactor.

It catalyses the reaction pyridoxamine 5'-phosphate + O2 + H2O = pyridoxal 5'-phosphate + H2O2 + NH4(+). The catalysed reaction is pyridoxine 5'-phosphate + O2 = pyridoxal 5'-phosphate + H2O2. Its pathway is cofactor metabolism; pyridoxal 5'-phosphate salvage; pyridoxal 5'-phosphate from pyridoxamine 5'-phosphate: step 1/1. It functions in the pathway cofactor metabolism; pyridoxal 5'-phosphate salvage; pyridoxal 5'-phosphate from pyridoxine 5'-phosphate: step 1/1. Functionally, catalyzes the oxidation of either pyridoxine 5'-phosphate (PNP) or pyridoxamine 5'-phosphate (PMP) into pyridoxal 5'-phosphate (PLP). The polypeptide is Pyridoxine/pyridoxamine 5'-phosphate oxidase (Cupriavidus pinatubonensis (strain JMP 134 / LMG 1197) (Cupriavidus necator (strain JMP 134))).